The chain runs to 256 residues: Thiazole synthase (256 aa).

K95 serves as the catalytic Schiff-base intermediate with DXP. 1-deoxy-D-xylulose 5-phosphate-binding positions include G156, 182–183, and 204–205; these read AG and NT.

Belongs to the ThiG family. In terms of assembly, homotetramer. Forms heterodimers with either ThiH or ThiS.

The protein resides in the cytoplasm. The catalysed reaction is [ThiS sulfur-carrier protein]-C-terminal-Gly-aminoethanethioate + 2-iminoacetate + 1-deoxy-D-xylulose 5-phosphate = [ThiS sulfur-carrier protein]-C-terminal Gly-Gly + 2-[(2R,5Z)-2-carboxy-4-methylthiazol-5(2H)-ylidene]ethyl phosphate + 2 H2O + H(+). It participates in cofactor biosynthesis; thiamine diphosphate biosynthesis. Functionally, catalyzes the rearrangement of 1-deoxy-D-xylulose 5-phosphate (DXP) to produce the thiazole phosphate moiety of thiamine. Sulfur is provided by the thiocarboxylate moiety of the carrier protein ThiS. In vitro, sulfur can be provided by H(2)S. This Shigella flexneri protein is Thiazole synthase.